The chain runs to 329 residues: Sulfate-binding protein (329 aa).

A signal peptide spans 1–19 (MNKWGVGLTFLLAATSVMA).

Belongs to the prokaryotic sulfate-binding protein family.

The protein resides in the periplasm. In terms of biological role, this protein specifically binds sulfate and is involved in its transmembrane transport. In Escherichia coli (strain K12), this protein is Sulfate-binding protein (sbp).